Reading from the N-terminus, the 459-residue chain is MHYPLSLALAFLPFGIQAQQTLWGQCGGQGYSGATSCVAGATCATVNEYYAQCTPAAGTSSATTLKTTTSSTTAAVTTTTTTQSPTGSASPTTTASASGNPFSGYQLYVNPYYSSEVASLAIPSLTGSLSSLQAAATAAAKVPSFVWLDTAAKVPTMGDYLADIQSQNAAGANPPIAGQFVVYDLPDRDCAALASNGEYSIADNGVEHYKSYIDSIREILVQYSDVHTLLVIEPDSLANLVTNLNVAKCANAESAYLECTNYALTQLNLPNVAMYLDAGHAGWLGWPANQQPAADLFASVYKNASSPAAVRGLATNVANYNAWTISSCPSYTQGNSVCDEQQYINAIAPLLQAQGFDAHFIVDTGRNGKQPTGQQAWGDWCNVINTGFGERPTTDTGDALVDAFVWVKPGGESDGTSDSSATRYDAHCGYSDALQPAPEAGTWFQAYFVQLLTNANPAF.

A signal peptide spans 1–18; that stretch reads MHYPLSLALAFLPFGIQA. The CBM1 domain occupies 19-54; sequence QQTLWGQCGGQGYSGATSCVAGATCATVNEYYAQCT. Cystine bridges form between cysteine 26-cysteine 43 and cysteine 37-cysteine 53. A thr-rich linker region spans residues 54 to 94; sequence TPAAGTSSATTLKTTTSSTTAAVTTTTTTQSPTGSASPTTT. The tract at residues 76-97 is disordered; sequence VTTTTTTQSPTGSASPTTTASA. Positions 95–459 are catalytic; it reads ASASGNPFSG…QLLTNANPAF (365 aa). Aspartate 189 is a catalytic residue. Cysteine 190 and cysteine 249 are joined by a disulfide. The active-site Proton donor is the aspartate 235. Asparagine 303 is a glycosylation site (N-linked (GlcNAc...) asparagine). The cysteines at positions 381 and 428 are disulfide-linked. Aspartate 414 functions as the Nucleophile in the catalytic mechanism.

Belongs to the glycosyl hydrolase 6 (cellulase B) family.

Its subcellular location is the secreted. The catalysed reaction is Hydrolysis of (1-&gt;4)-beta-D-glucosidic linkages in cellulose and cellotetraose, releasing cellobiose from the non-reducing ends of the chains.. In terms of biological role, the biological conversion of cellulose to glucose generally requires three types of hydrolytic enzymes: (1) Endoglucanases which cut internal beta-1,4-glucosidic bonds; (2) Exocellobiohydrolases that cut the disaccharide cellobiose from the non-reducing end of the cellulose polymer chain; (3) Beta-1,4-glucosidases which hydrolyze the cellobiose and other short cello-oligosaccharides to glucose. The chain is Probable 1,4-beta-D-glucan cellobiohydrolase C (cbhC) from Aspergillus niger (strain ATCC MYA-4892 / CBS 513.88 / FGSC A1513).